Here is a 339-residue protein sequence, read N- to C-terminus: tRNA-specific 2-thiouridylase MnmA (339 aa).

Residues 6-13 (AMSGGVDS) and Met-32 each bind ATP. Cys-92 serves as the catalytic Nucleophile. Cys-92 and Cys-186 form a disulfide bridge. Gly-116 is an ATP binding site. The tract at residues 134–136 (KDQ) is interaction with tRNA. Residue Cys-186 is the Cysteine persulfide intermediate of the active site. The interaction with tRNA stretch occupies residues 288–289 (RY).

The protein belongs to the MnmA/TRMU family.

It localises to the cytoplasm. The enzyme catalyses S-sulfanyl-L-cysteinyl-[protein] + uridine(34) in tRNA + AH2 + ATP = 2-thiouridine(34) in tRNA + L-cysteinyl-[protein] + A + AMP + diphosphate + H(+). In terms of biological role, catalyzes the 2-thiolation of uridine at the wobble position (U34) of tRNA, leading to the formation of s(2)U34. The chain is tRNA-specific 2-thiouridylase MnmA from Campylobacter curvus (strain 525.92).